A 340-amino-acid chain; its full sequence is MKITLFSSKPYWVKWFNELNKFSYEINYVTSACDIKSVNEAKGSEAVCCFVNDDLSKEVIETLHSNGTKVILMRCAGFNKVDLDTANKLGIPVLRVPAYSPNAVSEYALSLIMALNRKTHKAHDRVRDANFEINGMEGFNMVSKVYGIVGTGNIGEQLCRVLKLGFGAKVIAYDIIENKAVTDIGIEYVKTLDEIWKQCDVISLHTPLNSQTKYMVNSESIEKMRDGVMIINVSRGALVNASDAIVGLKSGKISSLGMDVYENETDYFYQDHNGSIIKDDNLSLLISYPNVMITSHQAWYTKEAISCICGTSLQNFVDFRSNQIKKSNLVNNPISSQPTQ.

NAD(+)-binding positions include 153–154 (NI), Asp174, 206–207 (TP), 233–235 (VSR), and Asp259. Arg235 is an active-site residue. Glu264 is a catalytic residue. Residue His296 is the Proton donor of the active site.

It belongs to the D-isomer specific 2-hydroxyacid dehydrogenase family.

The enzyme catalyses (R)-lactate + NAD(+) = pyruvate + NADH + H(+). In Dictyostelium discoideum (Social amoeba), this protein is Putative D-lactate dehydrogenase (ldhA).